The chain runs to 101 residues: Small ribosomal subunit protein uS14 (101 aa).

Belongs to the universal ribosomal protein uS14 family. Part of the 30S ribosomal subunit. Contacts proteins S3 and S10.

Its function is as follows. Binds 16S rRNA, required for the assembly of 30S particles and may also be responsible for determining the conformation of the 16S rRNA at the A site. The sequence is that of Small ribosomal subunit protein uS14 from Erythrobacter litoralis (strain HTCC2594).